The following is a 354-amino-acid chain: Putative [LysW]-L-2-aminoadipate/[LysW]-L-glutamate phosphate reductase (354 aa).

Residues 10–13 (SGVI) and 34–36 (SRR) each bind NADP(+). Cys153 is an active-site residue. Asn321 is a binding site for NADP(+).

This sequence belongs to the NAGSA dehydrogenase family. Type 1 subfamily. LysY sub-subfamily.

Its subcellular location is the cytoplasm. The enzyme catalyses [amino-group carrier protein]-C-terminal-N-(1-carboxy-5-oxopentan-1-yl)-L-glutamine + phosphate + NADP(+) = [amino-group carrier protein]-C-terminal-N-(1-carboxy-5-phosphooxy-5-oxopentan-1-yl)-L-glutamine + NADPH + H(+). It carries out the reaction [amino-group carrier protein]-C-terminal-gamma-(L-glutamyl-5-semialdehyde)-L-glutamate + phosphate + NADP(+) = [amino-group carrier protein]-C-terminal-gamma-(5-phospho-L-glutamyl)-L-glutamate + NADPH + H(+). Its pathway is amino-acid biosynthesis; L-lysine biosynthesis via AAA pathway; L-lysine from L-alpha-aminoadipate (Thermus route): step 3/5. It functions in the pathway amino-acid biosynthesis; L-arginine biosynthesis. Its function is as follows. Involved in both the arginine and lysine biosynthetic pathways. This Caldivirga maquilingensis (strain ATCC 700844 / DSM 13496 / JCM 10307 / IC-167) protein is Putative [LysW]-L-2-aminoadipate/[LysW]-L-glutamate phosphate reductase.